The sequence spans 64 residues: Large ribosomal subunit protein uL29 (64 aa).

Belongs to the universal ribosomal protein uL29 family.

The sequence is that of Large ribosomal subunit protein uL29 from Maridesulfovibrio salexigens (strain ATCC 14822 / DSM 2638 / NCIMB 8403 / VKM B-1763) (Desulfovibrio salexigens).